A 43-amino-acid polypeptide reads, in one-letter code: Protein PsbN (43 aa).

Residues 7–27 (LSIGIAVVVIAVTGFSIYTAF) traverse the membrane as a helical segment.

Belongs to the PsbN family.

The protein resides in the cellular thylakoid membrane. May play a role in photosystem I and II biogenesis. This Picosynechococcus sp. (strain ATCC 27264 / PCC 7002 / PR-6) (Agmenellum quadruplicatum) protein is Protein PsbN.